A 396-amino-acid chain; its full sequence is Nucleolar protein 12 (396 aa).

The disordered stretch occupies residues 43–104; the sequence is TDKDADGDEK…GKESKKSTKE (62 aa). The segment covering 47–58 has biased composition (acidic residues); sequence ADGDEKMEDAAS. Positions 64–73 are enriched in basic residues; it reads KKPSKKKLAK. Positions 87-104 are enriched in basic and acidic residues; the sequence is EPEKLVEEGKESKKSTKE. 2 RRM domains span residues 112-220 and 228-312; these read RTIF…SITH and RSVF…RCKN. The tract at residues 361-396 is disordered; the sequence is TKDDSKPVLKKGKKERSKTGRVTKRSQAFKKSQQKK. Positions 368-396 are enriched in basic residues; the sequence is VLKKGKKERSKTGRVTKRSQAFKKSQQKK.

The protein belongs to the RRM RBM34 family.

It localises to the nucleus. The protein resides in the nucleolus. In terms of biological role, involved in pre-25S rRNA processing. The protein is Nucleolar protein 12 (NOP12) of Candida glabrata (strain ATCC 2001 / BCRC 20586 / JCM 3761 / NBRC 0622 / NRRL Y-65 / CBS 138) (Yeast).